A 330-amino-acid polypeptide reads, in one-letter code: MQTLAQHLTSQAVNDSLSQLILTLADTSKAISHAVRHGALAGVLGATEQENVQGETQKKLDIITNDMLKDALKADGTVRGLASEEEDHVVEVSTNGQYLVCFDPLDGSSNIDINSLVGTIFSILPASAGELTETSFLQSGRNQLAAGYVLYGPSTMLALTTGQGVQLFTLHPETNEFLLTNAAMSISADTQEFAINMSNQRFWEAPMQTYIADLLLGKIGPREKSFNMRWIAAMVGDVHRVLSRGGIFTYPTDNKDPKKPYKLRLMYEANPMAFLVEQAGGKASTGYETILDIQPTQIHQRVAVILGSSNEVDACLSYHGLDYSEEPSLD.

Positions 84, 103, 105, and 106 each coordinate Mg(2+). Substrate is bound by residues D106 to S109, N196, and K262. E268 serves as a coordination point for Mg(2+).

This sequence belongs to the FBPase class 1 family. In terms of assembly, homotetramer. Mg(2+) serves as cofactor.

It is found in the cytoplasm. The catalysed reaction is beta-D-fructose 1,6-bisphosphate + H2O = beta-D-fructose 6-phosphate + phosphate. It functions in the pathway carbohydrate biosynthesis; gluconeogenesis. The chain is Fructose-1,6-bisphosphatase class 1 from Shewanella putrefaciens (strain CN-32 / ATCC BAA-453).